Consider the following 130-residue polypeptide: Small ribosomal subunit protein uS11 (130 aa).

This sequence belongs to the universal ribosomal protein uS11 family. As to quaternary structure, part of the 30S ribosomal subunit. Interacts with proteins S7 and S18. Binds to IF-3.

Located on the platform of the 30S subunit, it bridges several disparate RNA helices of the 16S rRNA. Forms part of the Shine-Dalgarno cleft in the 70S ribosome. The polypeptide is Small ribosomal subunit protein uS11 (Borreliella afzelii (strain PKo) (Borrelia afzelii)).